A 252-amino-acid chain; its full sequence is Glucosamine-6-phosphate deaminase (252 aa).

The Proton acceptor; for enolization step role is filled by Asp-64. The active-site For ring-opening step is the Asn-130. Catalysis depends on His-132, which acts as the Proton acceptor; for ring-opening step. Glu-137 (for ring-opening step) is an active-site residue.

It belongs to the glucosamine/galactosamine-6-phosphate isomerase family. NagB subfamily.

It catalyses the reaction alpha-D-glucosamine 6-phosphate + H2O = beta-D-fructose 6-phosphate + NH4(+). Its pathway is amino-sugar metabolism; N-acetylneuraminate degradation; D-fructose 6-phosphate from N-acetylneuraminate: step 5/5. Catalyzes the reversible isomerization-deamination of glucosamine 6-phosphate (GlcN6P) to form fructose 6-phosphate (Fru6P) and ammonium ion. The protein is Glucosamine-6-phosphate deaminase of Exiguobacterium sibiricum (strain DSM 17290 / CCUG 55495 / CIP 109462 / JCM 13490 / 255-15).